Reading from the N-terminus, the 232-residue chain is Sensory rhodopsin III (232 aa).

Transmembrane regions (helical) follow at residues 5-25, 39-59, 73-93, 100-120, 125-145, 168-188, and 194-214; these read IVWY…FVWF, LPPI…LIAG, FADW…LAGV, LAVA…SMSG, IAFA…IKTF, VVTW…TGII, and NFLV…ILLV. The residue at position 205 (Lys-205) is an N6-(retinylidene)lysine.

It belongs to the archaeal/bacterial/fungal opsin family. Interacts with HtrM. In terms of processing, the covalent binding of retinal to the apoprotein, bacterioopsin, generates bacteriorhodopsin.

It is found in the membrane. Its function is as follows. Sensory rhodopsin. Associates with an unusual transducer lacking a methyl-accepting transducer domain found in all other photosensory transducers. The chromophore is all-trans-retinal in the dark. This Haloarcula marismortui (strain ATCC 43049 / DSM 3752 / JCM 8966 / VKM B-1809) (Halobacterium marismortui) protein is Sensory rhodopsin III (xop2).